The sequence spans 429 residues: Probable M18 family aminopeptidase 2 (429 aa).

Zn(2+) is bound by residues H82, H156, and H401.

It belongs to the peptidase M18 family. Requires Zn(2+) as cofactor.

The protein is Probable M18 family aminopeptidase 2 of Pseudomonas aeruginosa (strain UCBPP-PA14).